We begin with the raw amino-acid sequence, 142 residues long: Mitochondrial import receptor subunit TOM22 homolog (142 aa).

Residues 1 to 18 (MAAAVAAAGAGEPLSPEE) are compositionally biased toward low complexity. Positions 1-41 (MAAAVAAAGAGEPLSPEELLPKAEAEKAEEELEEDDDDELD) are disordered. A2 carries the post-translational modification N-acetylalanine. Residues 2 to 83 (AAAVAAAGAG…AQKMYRFSRA (82 aa)) are Cytoplasmic-facing. S15 is subject to Phosphoserine. The span at 27 to 41 (KAEEELEEDDDDELD) shows a compositional bias: acidic residues. An import sequence; necessary for mitochondrion outer membrane localization and integration in the TOM complex region spans residues 41–50 (DETLSERLWG). Position 43 is a phosphothreonine (T43). S45 carries the post-translational modification Phosphoserine. A TMD; necessary for mitochondrion outer membrane localization and integration in the TOM complex region spans residues 83–103 (AALWIGTTSFMILVLPVVFET). The helical transmembrane segment at 84–103 (ALWIGTTSFMILVLPVVFET) threads the bilayer. The Mitochondrial intermembrane portion of the chain corresponds to 104-142 (EKLQMEQQQQLQQRQILLGPNTGLSGGMPGALPPLPGKM). The C-tail signal; necessary for mitochondrion outer membrane localization and integration in the TOM complex stretch occupies residues 123–142 (PNTGLSGGMPGALPPLPGKM).

This sequence belongs to the Tom22 family. As to quaternary structure, forms part of the preprotein translocase complex of the outer mitochondrial membrane (TOM complex) which consists of at least 7 different proteins (TOMM5, TOMM6, TOMM7, TOMM20, TOMM22, TOMM40 and TOMM70). Interacts with PPP2R2B and TOMM40.

Its subcellular location is the mitochondrion outer membrane. Functionally, central receptor component of the translocase of the outer membrane of mitochondria (TOM complex) responsible for the recognition and translocation of cytosolically synthesized mitochondrial preproteins. Together with the peripheral receptor TOM20 functions as the transit peptide receptor and facilitates the movement of preproteins into the translocation pore. Required for the translocation across the mitochondrial outer membrane of cytochrome P450 monooxygenases. This Mus musculus (Mouse) protein is Mitochondrial import receptor subunit TOM22 homolog (Tomm22).